The chain runs to 245 residues: U11/U12 small nuclear ribonucleoprotein 35 kDa protein (245 aa).

Residues 51 to 129 enclose the RRM domain; that stretch reads LTLFVARLNL…HEIFVDYELE (79 aa). Residues 146-162 are compositionally biased toward basic and acidic residues; that stretch reads GKKESGQLRFGGRDRPF. The interval 146-165 is disordered; the sequence is GKKESGQLRFGGRDRPFRKP. A Glycyl lysine isopeptide (Lys-Gly) (interchain with G-Cter in SUMO2) cross-link involves residue lysine 172. The segment at 173-222 is disordered; that stretch reads NDQFREGKRERRERSRSRERHWDSRMRDHHDRGREKRWQEREPARAWPEG. 2 stretches are compositionally biased toward basic and acidic residues: residues 174–185 and 192–216; these read DQFREGKRERRE and RHWD…REPA.

Component of the U11/U12 snRNPs that are part of the U12-type spliceosome.

It is found in the nucleus. The chain is U11/U12 small nuclear ribonucleoprotein 35 kDa protein (SNRNP35) from Bos taurus (Bovine).